A 121-amino-acid chain; its full sequence is Chorion class A proteins Ld9 (121 aa).

This sequence belongs to the chorion protein family.

This protein is one of many from the eggshell of the gypsy moth. This Lymantria dispar (Gypsy moth) protein is Chorion class A proteins Ld9.